Consider the following 672-residue polypeptide: Spermatid perinuclear RNA-binding protein (672 aa).

The 359-residue stretch at 5-363 (RSFANDDRHV…ALKRPFEDGL (359 aa)) folds into the DZF domain. The segment at 349–371 (GAGSSALKRPFEDGLGDDKDPNK) is disordered. Basic and acidic residues predominate over residues 357–371 (RPFEDGLGDDKDPNK). One can recognise a DRBM 1 domain in the interval 387–453 (DLMNALMRLN…AVKVLQAMGY (67 aa)). A compositionally biased stretch (basic and acidic residues) spans 467-476 (DEKSDNESKN). The interval 467-514 (DEKSDNESKNDTVSSNSSNNTGNSTTETSSTLEVRTQGPILTASGKNP) is disordered. Positions 477–497 (DTVSSNSSNNTGNSTTETSST) are enriched in low complexity. A DRBM 2 domain is found at 510 to 576 (SGKNPVMELN…ALAALEKLFS (67 aa)). An asymmetric dimethylarginine mark is found at arginine 612 and arginine 617.

As to quaternary structure, interacts with EIF2AK2. Associates with microtubules; it is unsure whether such interaction is direct or indirect. As to expression, isoform 2 is expressed in spermatocytes (at protein level). Expressed in testis, thymus, ovary, liver, kidney, heart, spleen and brain. Expressed in cortex, dentate gyrus and Purkinje cell layer and granule cells of the cerebellum.

It is found in the cytoplasm. The protein resides in the cytoskeleton. Its function is as follows. Involved in spermatogenesis and sperm function. Plays a role in regulation of cell growth. Binds to double-stranded DNA and RNA. Binds most efficiently to poly(I:C) RNA than to poly(dI:dC) DNA. Also binds to single-stranded poly(G) RNA. Binds non-specifically to the mRNA PRM1 3'-UTR and adenovirus VA RNA. The polypeptide is Spermatid perinuclear RNA-binding protein (Strbp) (Mus musculus (Mouse)).